Reading from the N-terminus, the 211-residue chain is MADS-box protein AGL72 (211 aa).

The 61-residue stretch at 1–61 folds into the MADS-box domain; that stretch reads MVRGKIEIKK…GRLYEFASSD (61 aa). The K-box domain maps to 88-187; sequence VQGLKKEMVT…LCQVGERPMG (100 aa).

Its subcellular location is the nucleus. Its function is as follows. MADS-box transcription factor that acts with AGL42 and AGL71 in the control of flowering time. Promotes flowering at the shoot apical and axillary meristems. Seems to act through a gibberellin-dependent pathway. Interacts genetically with SOC1 and its expression is directly regulated by SOC1. This chain is MADS-box protein AGL72 (AGL72), found in Arabidopsis thaliana (Mouse-ear cress).